Consider the following 348-residue polypeptide: uncharacterized protein (348 aa).

Residues 132-348 form a disordered region; that stretch reads SECRRSSDAL…QGTRRDSARL (217 aa). Over residues 161-178 the composition is skewed to low complexity; sequence STAPIPNAAISSARSSAR. A compositionally biased stretch (polar residues) spans 192 to 207; it reads SRSSSETRSPGGTVQP. The span at 227–273 shows a compositional bias: low complexity; sequence AAGSLLPAPRPPASSASSPQAAAPAAPSATRLPRRTTPSAPRPSSRP. Positions 274 to 287 are enriched in pro residues; the sequence is ARPPIPAARPPPRR. Over residues 288-310 the composition is skewed to low complexity; the sequence is TPGTPRPAAARARAPAGCSPARR.

This is an uncharacterized protein from Streptomyces fradiae (Streptomyces roseoflavus).